A 127-amino-acid chain; its full sequence is MICYFLVVTINFLKEKTTICHYFVNIFSLFLFLFVFVFVFIFVYFFYVILFYRFCSLFTYFPANSIWYYLSIINIFFPLCFFLYENFTGRNRRKCSLFCLTLIKITYTSPNHGFMVTGKEKFEKLRD.

Transmembrane regions (helical) follow at residues 29–49 (LFLF…FYVI) and 63–83 (ANSI…CFFL). N86 carries N-linked (GlcNAc...) asparagine glycosylation.

The protein localises to the membrane. Functionally, required for survival during stationary phase. The sequence is that of Stationary phase protein 3 (SPG3) from Saccharomyces cerevisiae (strain ATCC 204508 / S288c) (Baker's yeast).